The chain runs to 575 residues: Homocysteine/cysteine synthase (575 aa).

The residue at position 376 (Lys-376) is an N6-(pyridoxal phosphate)lysine.

Belongs to the trans-sulfuration enzymes family. MET7 subfamily. Pyridoxal 5'-phosphate is required as a cofactor.

It localises to the cytoplasm. It carries out the reaction O-acetyl-L-homoserine + methanethiol = L-methionine + acetate + H(+). It catalyses the reaction O-acetyl-L-homoserine + hydrogen sulfide = L-homocysteine + acetate. The enzyme catalyses O-acetyl-L-serine + hydrogen sulfide = L-cysteine + acetate. It participates in amino-acid biosynthesis; L-methionine biosynthesis via de novo pathway; L-homocysteine from O-acetyl-L-homoserine. Its function is as follows. Plays a role in inorganic sulfur assimilation during sulfur-limited conditions; catalyzes the conversion of O-acetyl-L-homoserine (OAH) into homocysteine in the methionine biosynthesis pathway. Also catalyzes the conversion of O-acetylserine (OAS) into cysteine, the last step in the cysteine biosynthesis pathway. However, it seems that in S.cerevisiae cysteine biosynthesis occurs exclusively through the cystathionine pathway and not via direct incorporation of sulfur into OAS. It therefore has no metabolic role in cysteine biosynthesis and may only have a regulatory role controlling OAS levels. The polypeptide is Homocysteine/cysteine synthase (Saccharomyces cerevisiae (strain ATCC 204508 / S288c) (Baker's yeast)).